The following is a 346-amino-acid chain: Peroxidase 9 (346 aa).

The signal sequence occupies residues 1 to 23 (MAISKLIPTLVLFVLFSFDVSVA). Cystine bridges form between C54–C134, C87–C92, C140–C342, and C219–C251. H85 (proton acceptor) is an active-site residue. Residues D86, V89, G91, D93, and S95 each coordinate Ca(2+). Residue P182 participates in substrate binding. A glycan (N-linked (GlcNAc...) asparagine) is linked at N185. H212 contributes to the heme b binding site. A Ca(2+)-binding site is contributed by T213. The Ca(2+) site is built by D264, S267, and D272.

It belongs to the peroxidase family. Classical plant (class III) peroxidase subfamily. Heme b is required as a cofactor. Ca(2+) serves as cofactor.

It is found in the secreted. It carries out the reaction 2 a phenolic donor + H2O2 = 2 a phenolic radical donor + 2 H2O. Removal of H(2)O(2), oxidation of toxic reductants, biosynthesis and degradation of lignin, suberization, auxin catabolism, response to environmental stresses such as wounding, pathogen attack and oxidative stress. These functions might be dependent on each isozyme/isoform in each plant tissue. This is Peroxidase 9 (PER9) from Arabidopsis thaliana (Mouse-ear cress).